The chain runs to 230 residues: Dephospho-CoA kinase (230 aa).

The segment at 1–20 (MSKYAAIPSPYSHQPQAPDH) is disordered. The DPCK domain occupies 26 to 225 (VVGLTGGIGS…QDYLKLAQQL (200 aa)). 34–39 (GSGKSA) serves as a coordination point for ATP.

Belongs to the CoaE family.

The protein localises to the cytoplasm. The catalysed reaction is 3'-dephospho-CoA + ATP = ADP + CoA + H(+). It functions in the pathway cofactor biosynthesis; coenzyme A biosynthesis; CoA from (R)-pantothenate: step 5/5. Its function is as follows. Catalyzes the phosphorylation of the 3'-hydroxyl group of dephosphocoenzyme A to form coenzyme A. This chain is Dephospho-CoA kinase, found in Psychrobacter arcticus (strain DSM 17307 / VKM B-2377 / 273-4).